We begin with the raw amino-acid sequence, 393 residues long: NAD(P)H-quinone oxidoreductase subunit H, chloroplastic (393 aa).

The protein belongs to the complex I 49 kDa subunit family. In terms of assembly, NDH is composed of at least 16 different subunits, 5 of which are encoded in the nucleus.

It is found in the plastid. Its subcellular location is the chloroplast thylakoid membrane. The catalysed reaction is a plastoquinone + NADH + (n+1) H(+)(in) = a plastoquinol + NAD(+) + n H(+)(out). It carries out the reaction a plastoquinone + NADPH + (n+1) H(+)(in) = a plastoquinol + NADP(+) + n H(+)(out). In terms of biological role, NDH shuttles electrons from NAD(P)H:plastoquinone, via FMN and iron-sulfur (Fe-S) centers, to quinones in the photosynthetic chain and possibly in a chloroplast respiratory chain. The immediate electron acceptor for the enzyme in this species is believed to be plastoquinone. Couples the redox reaction to proton translocation, and thus conserves the redox energy in a proton gradient. The protein is NAD(P)H-quinone oxidoreductase subunit H, chloroplastic of Zea mays (Maize).